Consider the following 155-residue polypeptide: Ribosomal RNA large subunit methyltransferase H (155 aa).

S-adenosyl-L-methionine contacts are provided by residues I71, G103, and 122–127 (FGRMVW).

It belongs to the RNA methyltransferase RlmH family. In terms of assembly, homodimer.

Its subcellular location is the cytoplasm. It catalyses the reaction pseudouridine(1915) in 23S rRNA + S-adenosyl-L-methionine = N(3)-methylpseudouridine(1915) in 23S rRNA + S-adenosyl-L-homocysteine + H(+). Functionally, specifically methylates the pseudouridine at position 1915 (m3Psi1915) in 23S rRNA. This chain is Ribosomal RNA large subunit methyltransferase H, found in Cereibacter sphaeroides (strain ATCC 17025 / ATH 2.4.3) (Rhodobacter sphaeroides).